Consider the following 519-residue polypeptide: NADH-quinone oxidoreductase subunit N (519 aa).

Transmembrane regions (helical) follow at residues 14-34 (LLPAIIMVVGASILLLSEVFL), 44-64 (AVLTVVTAVAAGAMALTTMFE), 82-102 (FLTFVVCVGLGLATLSSVSFL), 117-137 (LFASAGMSLLAMSNELITLFV), 167-187 (FILGAFSSAVLLYGAALLYGA), 209-229 (GLVYAGIILVITGFAFKVAAV), 249-269 (LMSVGVKAAAFAAMVRVFFMV), 278-298 (LLGLFSVLAFLTMVAGNLLAI), 307-327 (LAYSSIAHAGYLLVGVAALFV), 359-379 (ILYYLLAYTFSAVGAFAIVSV), 407-427 (WAFAMAAFMLSLGGIPPTIGF), 431-451 (LLIFQAAVDAGLIGLTIVGVL), and 487-507 (LALVLSTAAVVILGIIPGPIM).

It belongs to the complex I subunit 2 family. In terms of assembly, NDH-1 is composed of 14 different subunits. Subunits NuoA, H, J, K, L, M, N constitute the membrane sector of the complex.

The protein resides in the cell inner membrane. It carries out the reaction a quinone + NADH + 5 H(+)(in) = a quinol + NAD(+) + 4 H(+)(out). In terms of biological role, NDH-1 shuttles electrons from NADH, via FMN and iron-sulfur (Fe-S) centers, to quinones in the respiratory chain. The immediate electron acceptor for the enzyme in this species is believed to be ubiquinone. Couples the redox reaction to proton translocation (for every two electrons transferred, four hydrogen ions are translocated across the cytoplasmic membrane), and thus conserves the redox energy in a proton gradient. This chain is NADH-quinone oxidoreductase subunit N, found in Myxococcus xanthus (strain DK1622).